A 136-amino-acid polypeptide reads, in one-letter code: ATP synthase epsilon chain (136 aa).

The protein belongs to the ATPase epsilon chain family. In terms of assembly, F-type ATPases have 2 components, CF(1) - the catalytic core - and CF(0) - the membrane proton channel. CF(1) has five subunits: alpha(3), beta(3), gamma(1), delta(1), epsilon(1). CF(0) has three main subunits: a, b and c.

It is found in the cell inner membrane. Functionally, produces ATP from ADP in the presence of a proton gradient across the membrane. The chain is ATP synthase epsilon chain from Agrobacterium fabrum (strain C58 / ATCC 33970) (Agrobacterium tumefaciens (strain C58)).